Consider the following 151-residue polypeptide: Globin (151 aa).

Residues 2–151 (SLSDADKKAL…AAFNETLKKA (150 aa)) enclose the Globin domain. Residue His100 participates in heme b binding.

It belongs to the globin family.

In Biomphalaria glabrata (Bloodfluke planorb), this protein is Globin.